The primary structure comprises 128 residues: Probable 4-amino-4-deoxy-L-arabinose-phosphoundecaprenol flippase subunit ArnF (128 aa).

The Cytoplasmic portion of the chain corresponds to 1–2; that stretch reads MG. Residues 3–23 traverse the membrane as a helical segment; the sequence is LMWGLFSVIIASAAQLSLGFA. Over 24-35 the chain is Periplasmic; it reads ASHLPPMTHLWD. A helical transmembrane segment spans residues 36–56; sequence FIAALLAFGLDARILLLGLLG. Residues 57 to 76 lie on the Cytoplasmic side of the membrane; sequence YLLSVFCWYKTLHKLALSKA. The helical transmembrane segment at 77–97 threads the bilayer; that stretch reads YALLSMSYVLVWIASMVLPGW. Over 98–100 the chain is Periplasmic; the sequence is EGT. Residues 101 to 121 traverse the membrane as a helical segment; that stretch reads FSLKALLGVACIMSGLMLIFL. Residues 122-128 are Cytoplasmic-facing; it reads PTTKQRY.

The protein belongs to the ArnF family. In terms of assembly, heterodimer of ArnE and ArnF.

Its subcellular location is the cell inner membrane. It functions in the pathway bacterial outer membrane biogenesis; lipopolysaccharide biosynthesis. In terms of biological role, translocates 4-amino-4-deoxy-L-arabinose-phosphoundecaprenol (alpha-L-Ara4N-phosphoundecaprenol) from the cytoplasmic to the periplasmic side of the inner membrane. This chain is Probable 4-amino-4-deoxy-L-arabinose-phosphoundecaprenol flippase subunit ArnF, found in Escherichia coli O127:H6 (strain E2348/69 / EPEC).